A 508-amino-acid polypeptide reads, in one-letter code: MSGSALSFTIFPGSILGFLQIATVLTVLLLLFKTAQFYLHRRWLLRATQQFPSPPSHWFFGHKIPKDQEFQDILTRVKNFPSACPQWLWGSNVRIQVYDPDYMKLILGRSDPKSHHSYRFLAPWIGYGLLLLNGQTWFQHRRMLTPAFHYDTLKPYVGIMADSVRIMLDKWEQIVGQDSTLEIFQHITLMTLDTIMKCAFSQEGSVQLDRKYKSYIKAVEDLNNLSFFRIRNIFHQNDIIYSLSSNGRKARSAWQLAHEHTDQVIKSRKAQLQDEEELQKVKQKRRLDFLDILLFARIENGSSLSDKDLRAEVDTFMFEGHDTTASGISWIFYALATNPEHQQGCRKEIQSLLGDGASITWDDLDKMPYTTMCIKEALRIYPPVTAVSRMLSTPVTFPDGRSLPKGITVMLSFYGLHHNPTVWPNPEVFDPYRFAPESSRHSHSFLPFSGGARNCIGKQFAMNELKVAVALTLLRFELLPDPTRIPIPIPRLVLKSKNGIYLRLKKLQ.

The next 2 helical transmembrane spans lie at 10–30 (IFPG…VLLL) and 120–140 (FLAP…WFQH). Residue E319 coordinates heme. S438 carries the phosphoserine modification. C455 contacts heme.

It belongs to the cytochrome P450 family. Heme serves as cofactor. In terms of tissue distribution, expressed at proximal straight tubules and preglomerular arteries of the outer medulla as well in the cortex regions of kidney (at protein level).

Its subcellular location is the endoplasmic reticulum membrane. It is found in the microsome membrane. The enzyme catalyses an organic molecule + reduced [NADPH--hemoprotein reductase] + O2 = an alcohol + oxidized [NADPH--hemoprotein reductase] + H2O + H(+). It carries out the reaction dodecanoate + reduced [NADPH--hemoprotein reductase] + O2 = 12-hydroxydodecanoate + oxidized [NADPH--hemoprotein reductase] + H2O + H(+). The catalysed reaction is dodecanoate + reduced [NADPH--hemoprotein reductase] + O2 = (11R)-hydroxydodecanoate + oxidized [NADPH--hemoprotein reductase] + H2O + H(+). It catalyses the reaction (5Z,8Z,11Z,14Z)-eicosatetraenoate + reduced [NADPH--hemoprotein reductase] + O2 = 20-hydroxy-(5Z,8Z,11Z,14Z)-eicosatetraenoate + oxidized [NADPH--hemoprotein reductase] + H2O + H(+). The enzyme catalyses prostaglandin A1 + reduced [NADPH--hemoprotein reductase] + O2 = 20-hydroxy prostaglandin A1 + oxidized [NADPH--hemoprotein reductase] + H2O + H(+). It functions in the pathway lipid metabolism; fatty acid metabolism. With respect to regulation, activated by cytochrome b5 and phosphatidylserine. In terms of biological role, a cytochrome P450 monooxygenase involved in the metabolism of fatty acids. Catalyzes predominantly the oxidation of the terminal carbon (omega-oxidation) of saturated and unsaturated fatty acids. May act as a major omega-hydroxylase for dodecanoic (lauric) acid in kidney. At preglomerular arteries, may participate in omega-hydroxylation of (5Z,8Z,11Z,14Z)-eicosatetraenoic acid (arachidonate) to 20-hydroxyeicosatetraenoic acid (20-HETE), a signaling molecule acting both as vasoconstrictive and natriuretic with overall effect on arterial blood pressure. Can also catalyze the oxidation of the penultimate carbon (omega-1 oxidation) of fatty acids with lower efficiency, displaying a preference for the (R)-stereoisomer. Mechanistically, uses molecular oxygen inserting one oxygen atom into a substrate, and reducing the second into a water molecule, with two electrons provided by NADPH via cytochrome P450 reductase (NADPH--hemoprotein reductase). The polypeptide is Cytochrome P450 4A12 (Cyp4a12) (Rattus norvegicus (Rat)).